Consider the following 127-residue polypeptide: UPF0102 protein Mmwyl1_2395 (127 aa).

The protein belongs to the UPF0102 family.

The polypeptide is UPF0102 protein Mmwyl1_2395 (Marinomonas sp. (strain MWYL1)).